The primary structure comprises 193 residues: Holliday junction branch migration complex subunit RuvA (193 aa).

Residues 1–64 (MIGRIAGILL…EDAHLLYGFL (64 aa)) are domain I. The interval 65-139 (TPQERTTFRE…GKLGADLGAL (75 aa)) is domain II. The tract at residues 139–143 (LAGAA) is flexible linker. The interval 144–193 (SPSDHAADILNALVALGYSEKEGLAAIKNVPAGTGVSDGIKLALKALSKA) is domain III.

Belongs to the RuvA family. As to quaternary structure, homotetramer. Forms an RuvA(8)-RuvB(12)-Holliday junction (HJ) complex. HJ DNA is sandwiched between 2 RuvA tetramers; dsDNA enters through RuvA and exits via RuvB. An RuvB hexamer assembles on each DNA strand where it exits the tetramer. Each RuvB hexamer is contacted by two RuvA subunits (via domain III) on 2 adjacent RuvB subunits; this complex drives branch migration. In the full resolvosome a probable DNA-RuvA(4)-RuvB(12)-RuvC(2) complex forms which resolves the HJ.

It localises to the cytoplasm. Its function is as follows. The RuvA-RuvB-RuvC complex processes Holliday junction (HJ) DNA during genetic recombination and DNA repair, while the RuvA-RuvB complex plays an important role in the rescue of blocked DNA replication forks via replication fork reversal (RFR). RuvA specifically binds to HJ cruciform DNA, conferring on it an open structure. The RuvB hexamer acts as an ATP-dependent pump, pulling dsDNA into and through the RuvAB complex. HJ branch migration allows RuvC to scan DNA until it finds its consensus sequence, where it cleaves and resolves the cruciform DNA. The polypeptide is Holliday junction branch migration complex subunit RuvA (Burkholderia vietnamiensis (strain G4 / LMG 22486) (Burkholderia cepacia (strain R1808))).